The chain runs to 366 residues: Arfaptin-1 (366 aa).

Residues 1 to 78 (MAEESPKNSA…SSAPPLPCVL (78 aa)) are disordered. Position 2 is an N-acetylalanine (Ala2). Ser5 carries the post-translational modification Phosphoserine. Positions 22–35 (GDAHEHGYNRDLKH) are enriched in basic and acidic residues. Residues Ser36 and Ser39 each carry the phosphoserine modification. The segment covering 44–53 (SETQITSHGF) has biased composition (polar residues). 3 positions are modified to phosphoserine: Ser69, Ser79, and Ser125. The AH domain maps to 146-346 (TVDLELEAQI…NQKQLEQTLK (201 aa)). Phosphothreonine is present on Thr354.

Forms homodimers or heterodimers with ARFIP2. Interacts with non-myristoylated GTP-bound ARF3, but not to GDP-bound ARF3. Interacts with ARF1. Binds with lower affinity to ARF5 and with very little affinity to ARF6. Interacts with ARL1. Interacts with ATG9A.

The protein localises to the golgi apparatus. It is found in the trans-Golgi network membrane. Functionally, plays a role in controlling biogenesis of secretory granules at the trans-Golgi network. Mechanistically, binds ARF-GTP at the neck of a growing secretory granule precursor and forms a protective scaffold. Once the granule precursor has been completely loaded, active PRKD1 phosphorylates ARFIP1 and releases it from ARFs. In turn, ARFs induce fission. Through this mechanism, ensures proper secretory granule formation at the Golgi of pancreatic beta cells. The polypeptide is Arfaptin-1 (Rattus norvegicus (Rat)).